Reading from the N-terminus, the 284-residue chain is MEMO1 family protein YG5714_2180 (284 aa).

This sequence belongs to the MEMO1 family.

This chain is MEMO1 family protein YG5714_2180, found in Saccharolobus islandicus (strain Y.G.57.14 / Yellowstone #1) (Sulfolobus islandicus).